We begin with the raw amino-acid sequence, 147 residues long: UPF0208 membrane protein PM0703 (147 aa).

The next 2 membrane-spanning stretches (helical) occupy residues 32–52 (VIKA…FAIT) and 65–85 (LAIA…GLYW).

It belongs to the UPF0208 family.

The protein resides in the cell inner membrane. This Pasteurella multocida (strain Pm70) protein is UPF0208 membrane protein PM0703.